Reading from the N-terminus, the 129-residue chain is Glycine cleavage system H protein (129 aa).

In terms of domain architecture, Lipoyl-binding spans 24-106; sequence VFTVGISEHA…YGDGWLFKIK (83 aa). Residue Lys-65 is modified to N6-lipoyllysine.

Belongs to the GcvH family. The glycine cleavage system is composed of four proteins: P, T, L and H. The cofactor is (R)-lipoate.

The glycine cleavage system catalyzes the degradation of glycine. The H protein shuttles the methylamine group of glycine from the P protein to the T protein. This is Glycine cleavage system H protein from Alteromonas mediterranea (strain DSM 17117 / CIP 110805 / LMG 28347 / Deep ecotype).